The chain runs to 355 residues: Uroporphyrinogen decarboxylase (355 aa).

Residues 27 to 31 (RQAGR), F46, D78, Y155, S210, and H328 each bind substrate.

It belongs to the uroporphyrinogen decarboxylase family. Homodimer.

The protein resides in the cytoplasm. It catalyses the reaction uroporphyrinogen III + 4 H(+) = coproporphyrinogen III + 4 CO2. Its pathway is porphyrin-containing compound metabolism; protoporphyrin-IX biosynthesis; coproporphyrinogen-III from 5-aminolevulinate: step 4/4. Catalyzes the decarboxylation of four acetate groups of uroporphyrinogen-III to yield coproporphyrinogen-III. In Pseudomonas aeruginosa (strain ATCC 15692 / DSM 22644 / CIP 104116 / JCM 14847 / LMG 12228 / 1C / PRS 101 / PAO1), this protein is Uroporphyrinogen decarboxylase.